The sequence spans 101 residues: Large ribosomal subunit protein uL23 (101 aa).

The protein belongs to the universal ribosomal protein uL23 family. As to quaternary structure, part of the 50S ribosomal subunit. Contacts protein L29, and trigger factor when it is bound to the ribosome.

In terms of biological role, one of the early assembly proteins it binds 23S rRNA. One of the proteins that surrounds the polypeptide exit tunnel on the outside of the ribosome. Forms the main docking site for trigger factor binding to the ribosome. The protein is Large ribosomal subunit protein uL23 of Rhodococcus erythropolis (strain PR4 / NBRC 100887).